The sequence spans 509 residues: Steroid 17-alpha-hydroxylase/17,20 lyase (509 aa).

N202 provides a ligand contact to substrate. C442 is a heme binding site.

Belongs to the cytochrome P450 family. Requires heme as cofactor.

It is found in the endoplasmic reticulum membrane. It localises to the microsome membrane. It catalyses the reaction a C21-steroid + reduced [NADPH--hemoprotein reductase] + O2 = a 17alpha-hydroxy-C21-steroid + oxidized [NADPH--hemoprotein reductase] + H2O + H(+). The enzyme catalyses progesterone + reduced [NADPH--hemoprotein reductase] + O2 = 17alpha-hydroxyprogesterone + oxidized [NADPH--hemoprotein reductase] + H2O + H(+). It carries out the reaction pregnenolone + reduced [NADPH--hemoprotein reductase] + O2 = 17alpha-hydroxypregnenolone + oxidized [NADPH--hemoprotein reductase] + H2O + H(+). The catalysed reaction is 17alpha-hydroxyprogesterone + reduced [NADPH--hemoprotein reductase] + O2 = androst-4-ene-3,17-dione + acetate + oxidized [NADPH--hemoprotein reductase] + H2O + 2 H(+). It catalyses the reaction 17alpha-hydroxyprogesterone + reduced [NADPH--hemoprotein reductase] + O2 = 16alpha,17alpha-dihydroxyprogesterone + oxidized [NADPH--hemoprotein reductase] + H2O + H(+). The enzyme catalyses 16alpha,17alpha-dihydroxyprogesterone + reduced [NADPH--hemoprotein reductase] + O2 = 6beta,16alpha,17alpha-trihydroxyprogesterone + oxidized [NADPH--hemoprotein reductase] + H2O + H(+). It carries out the reaction 17alpha-hydroxypregnenolone + reduced [NADPH--hemoprotein reductase] + O2 = 3beta-hydroxyandrost-5-en-17-one + acetate + oxidized [NADPH--hemoprotein reductase] + H2O + 2 H(+). The catalysed reaction is 16alpha,17alpha-dihydroxypregnenolone + reduced [NADPH--hemoprotein reductase] + O2 = 3beta,16alpha-dihydroxy-androst-5-en-17-one + acetate + oxidized [NADPH--hemoprotein reductase] + H2O + 2 H(+). It catalyses the reaction 3beta-hydroxyandrost-5-en-17-one + reduced [NADPH--hemoprotein reductase] + O2 = 3beta,16alpha-dihydroxy-androst-5-en-17-one + oxidized [NADPH--hemoprotein reductase] + H2O + H(+). The enzyme catalyses androst-4-ene-3,17-dione + reduced [NADPH--hemoprotein reductase] + O2 = 16alpha-hydroxyandrost-4-ene-3,17-dione + oxidized [NADPH--hemoprotein reductase] + H2O + H(+). The protein operates within steroid hormone biosynthesis. It participates in steroid biosynthesis; glucocorticoid biosynthesis. Regulated predominantly by intracellular cAMP levels. The 17,20-lyase activity is stimulated by cytochrome b5, which acts as an allosteric effector increasing the Vmax of the lyase activity. Its function is as follows. A cytochrome P450 monooxygenase involved in corticoid and androgen biosynthesis. Catalyzes 17-alpha hydroxylation of C21 steroids, which is common for both pathways. A second oxidative step, required only for androgen synthesis, involves an acyl-carbon cleavage. The 17-alpha hydroxy intermediates, as part of adrenal glucocorticoids biosynthesis pathway, are precursors of cortisol. Hydroxylates steroid hormones, pregnenolone and progesterone to form 17-alpha hydroxy metabolites, followed by the cleavage of the C17-C20 bond to form C19 steroids, dehydroepiandrosterone (DHEA) and androstenedione. Has 16-alpha hydroxylase activity. Catalyzes 16-alpha hydroxylation of 17-alpha hydroxy pregnenolone, followed by the cleavage of the C17-C20 bond to form 16-alpha-hydroxy DHEA. Also 16-alpha hydroxylates androgens, relevant for estriol synthesis. Mechanistically, uses molecular oxygen inserting one oxygen atom into a substrate, and reducing the second into a water molecule, with two electrons provided by NADPH via cytochrome P450 reductase (CPR; NADPH-ferrihemoprotein reductase). This Ovis aries (Sheep) protein is Steroid 17-alpha-hydroxylase/17,20 lyase (CYP17A1).